The sequence spans 345 residues: MEGLEAYDYHLPPEQIAQEGVEPRDMARLMVVYREGPFRVAHKRVRDLPEFLRPGDVLVFNESKVIPARLLARKPTGGKVEILLVRERSPGLWEALLGPARKAPPGTRLLLLSPKDLAPVPGLQAEVVAVEEDGVRLLRFQGDLVAHLEEVGEVPLPPYIKAKIPMERYQTVYARRPGSVAAPTAGLHFTPELLERLREMGVELRFLTLHVGPGTFRPVKGDPEKHEMHAEPYAIPEEVAEAVNRAKAEGRRVVAVGTTVVRALESAYREGVGVVAGEGETRLFIRPPYTFKVVDALFTNFHLPRSTLLMLVAAFLGRERTLEAYRLAVAEGYRFYSLGDAMLIL.

This sequence belongs to the QueA family. As to quaternary structure, monomer.

The protein localises to the cytoplasm. It carries out the reaction 7-aminomethyl-7-carbaguanosine(34) in tRNA + S-adenosyl-L-methionine = epoxyqueuosine(34) in tRNA + adenine + L-methionine + 2 H(+). It participates in tRNA modification; tRNA-queuosine biosynthesis. In terms of biological role, transfers and isomerizes the ribose moiety from AdoMet to the 7-aminomethyl group of 7-deazaguanine (preQ1-tRNA) to give epoxyqueuosine (oQ-tRNA). This Thermus thermophilus (strain ATCC BAA-163 / DSM 7039 / HB27) protein is S-adenosylmethionine:tRNA ribosyltransferase-isomerase.